The chain runs to 512 residues: ATP synthase subunit alpha (512 aa).

169–176 (GDRQTGKT) provides a ligand contact to ATP.

It belongs to the ATPase alpha/beta chains family. In terms of assembly, F-type ATPases have 2 components, CF(1) - the catalytic core - and CF(0) - the membrane proton channel. CF(1) has five subunits: alpha(3), beta(3), gamma(1), delta(1), epsilon(1). CF(0) has three main subunits: a(1), b(2) and c(9-12). The alpha and beta chains form an alternating ring which encloses part of the gamma chain. CF(1) is attached to CF(0) by a central stalk formed by the gamma and epsilon chains, while a peripheral stalk is formed by the delta and b chains.

It localises to the cell inner membrane. The catalysed reaction is ATP + H2O + 4 H(+)(in) = ADP + phosphate + 5 H(+)(out). In terms of biological role, produces ATP from ADP in the presence of a proton gradient across the membrane. The alpha chain is a regulatory subunit. This chain is ATP synthase subunit alpha, found in Rickettsia akari (strain Hartford).